Reading from the N-terminus, the 136-residue chain is uncharacterized protein (136 aa).

2 consecutive transmembrane segments (helical) span residues 25–47 (ILKASILFLAIASFHLFSIPHAF) and 78–97 (ITGAFTLTALWAMAVLLLTA).

It is found in the cell membrane. This is an uncharacterized protein from Bacillus subtilis (strain 168).